The chain runs to 348 residues: Doublesex- and mab-3-related transcription factor dmd-10 (348 aa).

2 consecutive DNA-binding regions (DM) follow at residues 43 to 91 (CQRC…YNQF) and 119 to 166 (CQKC…KIRR). The segment at 316–348 (SMSMSSSPSKDDESGDEDSDGLNSNSIIDVITV) is disordered.

It belongs to the DMRT family. Dimorphically expressed in the dimorphically connected interneuron AVG; expression is observed in the AVG in males, but not in hermaphrodites.

It is found in the nucleus. Functionally, transcription factor. Plays a role in neuronal signaling in polymodal sensory neuron ASH, downstream of sensory receptor activation. Required for maintenance of AVG synapses. This chain is Doublesex- and mab-3-related transcription factor dmd-10, found in Caenorhabditis elegans.